A 725-amino-acid chain; its full sequence is Polyribonucleotide nucleotidyltransferase (725 aa).

Mg(2+)-binding residues include D487 and D493. A KH domain is found at 554-613 (PRIETMQIPTDKIREVIGTGGKVIREIVEKTGAKIDIQDTGVVKIASSDGKAIKAAYNWI). One can recognise an S1 motif domain in the interval 623–691 (GMIYDGTVVK…ERGKIRLSMK (69 aa)). The interval 699–725 (EDLTEKLKAEREADRNRERQARQSAGE) is disordered. A compositionally biased stretch (basic and acidic residues) spans 701–719 (LTEKLKAEREADRNRERQA).

Belongs to the polyribonucleotide nucleotidyltransferase family. The cofactor is Mg(2+).

It is found in the cytoplasm. The catalysed reaction is RNA(n+1) + phosphate = RNA(n) + a ribonucleoside 5'-diphosphate. In terms of biological role, involved in mRNA degradation. Catalyzes the phosphorolysis of single-stranded polyribonucleotides processively in the 3'- to 5'-direction. This is Polyribonucleotide nucleotidyltransferase from Methylobacterium sp. (strain 4-46).